Here is a 563-residue protein sequence, read N- to C-terminus: TSET complex member tstC (563 aa).

Disordered stretches follow at residues 146-170 (SPHQPPHYNTHHHTSTPSVAPSFIT), 192-213 (NSLSNSISNSNSNNNNNNNNDS), 235-298 (VLNS…NYNN), 376-395 (HPNAGKEAKEKEKEKENEFK), and 428-563 (GSAS…FLNF). Basic and acidic residues predominate over residues 379-395 (AGKEAKEKEKEKENEFK). Residues 428–459 (GSASSKSSPSTSPLSSSYNPSSPETSENSFSA) are compositionally biased toward low complexity. Over residues 460–473 (TPISDSNSLKNSID) the composition is skewed to polar residues. Low complexity-rich tracts occupy residues 474 to 487 (NNNNNNNNNNNNNN) and 507 to 543 (NNSKSSLSTSNSNISTPDNGASSPLASSTSGSASSAA). A compositionally biased stretch (polar residues) spans 552–563 (NSAKTKMNFLNF).

Component of the TSET complex, a heterohexamer composed of tstA, tstB, tstC, tstD, tstE and tstF, which may act in plasma membrane turnover. tstA, tstB, tstC and tstD are likely to be the core complex members with tstE and tstF acting as associated scaffold proteins.

The polypeptide is TSET complex member tstC (Dictyostelium discoideum (Social amoeba)).